The primary structure comprises 340 residues: tRNA N6-adenosine threonylcarbamoyltransferase (340 aa).

Residues histidine 111 and histidine 115 each contribute to the Fe cation site. Residues valine 133–glycine 137, aspartate 166, glycine 179, aspartate 183, and asparagine 273 contribute to the substrate site. Aspartate 301 contacts Fe cation.

Belongs to the KAE1 / TsaD family. It depends on Fe(2+) as a cofactor.

The protein localises to the cytoplasm. It catalyses the reaction L-threonylcarbamoyladenylate + adenosine(37) in tRNA = N(6)-L-threonylcarbamoyladenosine(37) in tRNA + AMP + H(+). Functionally, required for the formation of a threonylcarbamoyl group on adenosine at position 37 (t(6)A37) in tRNAs that read codons beginning with adenine. Is involved in the transfer of the threonylcarbamoyl moiety of threonylcarbamoyl-AMP (TC-AMP) to the N6 group of A37, together with TsaE and TsaB. TsaD likely plays a direct catalytic role in this reaction. The polypeptide is tRNA N6-adenosine threonylcarbamoyltransferase (Pelobacter propionicus (strain DSM 2379 / NBRC 103807 / OttBd1)).